The chain runs to 72 residues: UPF0154 protein BLi02038/BL02936 (72 aa).

Residues 4 to 24 traverse the membrane as a helical segment; sequence WVVILVGVLALLAGVALGFFI.

It belongs to the UPF0154 family.

It is found in the cell membrane. The polypeptide is UPF0154 protein BLi02038/BL02936 (Bacillus licheniformis (strain ATCC 14580 / DSM 13 / JCM 2505 / CCUG 7422 / NBRC 12200 / NCIMB 9375 / NCTC 10341 / NRRL NRS-1264 / Gibson 46)).